We begin with the raw amino-acid sequence, 475 residues long: MSALKAVFQYIDENQDRYVKKLAEWVAIQSVSAWPEKRGEIRRMMEVAAADVQRLGGSVELVDIGKQKLPDGSEIPLPPILLGKLGSDPQKKTVCIYGHLDVQPAALEDGWDSEPFTLVEREGKLYGRGSTDDKGPVAGWMNALEAYQKTGQEIPVNLRFCLEGMEESGSEGLDELIFAQKDKFFKDVDYVCISDNYWLGKNKPCITYGLRGICYFFIEVECSDKDLHSGVYGGSVHEAMTDLISLMGCLVDKKGKILIPGINDAVAPVTDEEHALYDHIDFDMEEFAKDVGAETLLHSCKKDILMHRWRYPSLSLHGIEGAFSGSGAKTVIPRKVVGKFSIRLVPDMIPEVVSEQVSSYLSKKFAELQSPNKFKVYMGHGGKPWVSDFNHPHYQAGRRALKTVFGVEPDLTREGGSIPVTLTFQEATGKNVMLLPVGSADDGAHSQNEKLNRLNYIEGTKMLAAYLYEVSQLKN.

Ser-58 is subject to Phosphoserine. His-99 is a binding site for Mn(2+). Asp-101 is a catalytic residue. Asp-132 serves as a coordination point for Mn(2+). Catalysis depends on Glu-166, which acts as the Proton acceptor. Residues 166–167, Asp-195, and His-228 contribute to the substrate site; that span reads EE. Mn(2+) is bound by residues Glu-167 and Asp-195. Ser-299 carries the post-translational modification Phosphoserine. Positions 330, 343, 417, and 445 each coordinate substrate. Residue His-445 participates in Mn(2+) binding.

This sequence belongs to the peptidase M20A family. Homodimer. Requires Mn(2+) as cofactor. As to expression, highly expressed in the parafascicular nucleus of the thalamus, tuberomammillary nucleus of the hypothalamus and the mitral cell layer of the olfactory bulb.

The protein localises to the cytoplasm. The catalysed reaction is Hydrolysis of dipeptides, preferentially hydrophobic dipeptides including prolyl amino acids.. It catalyses the reaction L-threonyl-L-threonine + H2O = 2 L-threonine. The enzyme catalyses L-threonyl-L-serine + H2O = L-threonine + L-serine. It carries out the reaction L-seryl-L-threonine + H2O = L-threonine + L-serine. The catalysed reaction is L-cysteinylglycine + H2O = L-cysteine + glycine. It catalyses the reaction L-alanyl-L-cysteine + H2O = L-cysteine + L-alanine. The enzyme catalyses (S)-lactate + L-phenylalanine = N-[(S)-lactoyl]-L-phenylalanine + H2O. Its activity is regulated as follows. Inhibited by bestatin. Functionally, catalyzes the peptide bond hydrolysis in dipeptides, displaying a non-redundant activity toward threonyl dipeptides. Mediates threonyl dipeptide catabolism in a tissue-specific way. Has high dipeptidase activity toward cysteinylglycine, an intermediate metabolite in glutathione metabolism. Metabolizes N-lactoyl-amino acids, both through hydrolysis to form lactic acid and amino acids, as well as through their formation by reverse proteolysis. Plays a role in the regulation of cell cycle arrest and apoptosis. The chain is Cytosolic non-specific dipeptidase (Cndp2) from Mus musculus (Mouse).